The sequence spans 87 residues: Small ribosomal subunit protein bS20 (87 aa).

The disordered stretch occupies residues 1–26 (MANIKSAKKRAIQSEKRRKHNASRRS).

The protein belongs to the bacterial ribosomal protein bS20 family.

In terms of biological role, binds directly to 16S ribosomal RNA. The protein is Small ribosomal subunit protein bS20 of Photorhabdus laumondii subsp. laumondii (strain DSM 15139 / CIP 105565 / TT01) (Photorhabdus luminescens subsp. laumondii).